A 557-amino-acid polypeptide reads, in one-letter code: Polypyrimidine tract-binding protein 1 (557 aa).

N-acetylmethionine is present on Met-1. Ser-16 carries the post-translational modification Phosphoserine. RRM domains are found at residues 59 to 143, 184 to 260, and 363 to 437; these read RVIH…SSPN, LRII…FSKL, and SVLL…LSKH. A Glycyl lysine isopeptide (Lys-Gly) (interchain with G-Cter in SUMO2) cross-link involves residue Lys-65. At Tyr-127 the chain carries Phosphotyrosine. The residue at position 138 (Thr-138) is a Phosphothreonine. The residue at position 141 (Ser-141) is a Phosphoserine. A Glycyl lysine isopeptide (Lys-Gly) (interchain with G-Cter in SUMO2) cross-link involves residue Lys-218. Phosphoserine is present on Ser-459. The 76-residue stretch at 480–555 folds into the RRM 4 domain; sequence ATLHLSNIPP…HHLRVSFSKS (76 aa).

As to quaternary structure, monomer. Part of a ternary complex containing KHSRP, PTBP1, PTBP2 and HNRPH1. Interacts with RAVER1 and SFPQ. Interacts with IVNS1ABP (via BACK domain); the interaction is direct.

It localises to the nucleus. Its function is as follows. Plays a role in pre-mRNA splicing and in the regulation of alternative splicing events. Activates exon skipping of its own pre-mRNA during muscle cell differentiation. Binds to the polypyrimidine tract of introns. May promote RNA looping when bound to two separate polypyrimidine tracts in the same pre-mRNA. May promote the binding of U2 snRNP to pre-mRNA. Cooperates with RAVER1 to modulate switching between mutually exclusive exons during maturation of the TPM1 pre-mRNA. Represses the splicing of MAPT/Tau exon 10. Binds to polypyrimidine-rich controlling element (PCE) of CFTR and promotes exon skipping of CFTR exon 9, thereby antagonizing TIA1 and its role in exon inclusion of CFTR exon 9. Plays a role in the splicing of pyruvate kinase PKM by binding repressively to a polypyrimidine tract flanking PKM exon 9, inhibiting exon 9 inclusion and resulting in exon 10 inclusion and production of the PKM M2 isoform. In case of infection by picornaviruses, binds to the viral internal ribosome entry site (IRES) and stimulates the IRES-mediated translation. In Homo sapiens (Human), this protein is Polypyrimidine tract-binding protein 1 (PTBP1).